A 400-amino-acid chain; its full sequence is Formate-dependent phosphoribosylglycinamide formyltransferase (400 aa).

N(1)-(5-phospho-beta-D-ribosyl)glycinamide contacts are provided by residues E22–L23 and E82. Residues R115, K157, S162–Q167, E197–V200, and E205 contribute to the ATP site. An ATP-grasp domain is found at R120–L315. E274 and E286 together coordinate Mg(2+). N(1)-(5-phospho-beta-D-ribosyl)glycinamide is bound by residues D293, K362, and R369 to R370.

It belongs to the PurK/PurT family. As to quaternary structure, homodimer.

The enzyme catalyses N(1)-(5-phospho-beta-D-ribosyl)glycinamide + formate + ATP = N(2)-formyl-N(1)-(5-phospho-beta-D-ribosyl)glycinamide + ADP + phosphate + H(+). Its pathway is purine metabolism; IMP biosynthesis via de novo pathway; N(2)-formyl-N(1)-(5-phospho-D-ribosyl)glycinamide from N(1)-(5-phospho-D-ribosyl)glycinamide (formate route): step 1/1. Involved in the de novo purine biosynthesis. Catalyzes the transfer of formate to 5-phospho-ribosyl-glycinamide (GAR), producing 5-phospho-ribosyl-N-formylglycinamide (FGAR). Formate is provided by PurU via hydrolysis of 10-formyl-tetrahydrofolate. In Mycolicibacterium gilvum (strain PYR-GCK) (Mycobacterium gilvum (strain PYR-GCK)), this protein is Formate-dependent phosphoribosylglycinamide formyltransferase.